We begin with the raw amino-acid sequence, 510 residues long: Allene oxide synthase 2, chloroplastic (510 aa).

The transit peptide at 1 to 31 (MALTLSFSLPLPSLHQKIPSKYSTFRPIIVS) directs the protein to the chloroplast. 3 residues coordinate heme b: Lys127, His158, and Lys162. Residues Asn315 and Lys321 each contribute to the (13S)-hydroperoxy-(9Z,11E)-octadecadienoate site. Asn315 is a (13S)-hydroperoxy-(9Z,11E,15Z)-octadecatrienoate binding site. Residues Lys463 and Cys465 each coordinate heme b.

It belongs to the cytochrome P450 family. The cofactor is heme b. Expressed in flower buds, leaves, roots, stems, petioles and cotyledons. Not detected in ripe fruits. Expressed in sieve elements.

It is found in the plastid. It localises to the chloroplast inner membrane. It catalyses the reaction (13S)-hydroperoxy-(9Z,11E,15Z)-octadecatrienoate = (9Z,13S,15Z)-12,13-epoxyoctadeca-9,11,15-trienoate + H2O. The catalysed reaction is (13S)-hydroperoxy-(9Z,11E)-octadecadienoate = (9Z,13S)-12,13-epoxyoctadeca-9,11-dienoate + H2O. Cytochrome P450 of the CYP74A subfamily involved in the biosynthesis of jasmonic acid from lipoxygenase-derived hydroperoxides of free fatty acids. Catalyzes the synthesis of unstable allene oxide, which is further converted spontaneously by hydrolysis or cyclization. Metabolizes 13- but not 9-hydroperoxides of linoleic and linolenic acids. Can use 15S-hydroperoxy-11(Z),13(E),17(Z)-eicosatrienoic acid (15-HPET) and 13S-hydroperoxy-9(Z),11(E),15(Z)-octadecatrienoic acid (13-HPOT) as substrates, but only 50% activity with 13S-hydroperoxy-9(Z),11(E)-octadecadienoic acid (13-HPOD). This chain is Allene oxide synthase 2, chloroplastic, found in Solanum lycopersicum (Tomato).